Reading from the N-terminus, the 267-residue chain is 3-methyl-2-oxobutanoate hydroxymethyltransferase (267 aa).

Positions 45 and 84 each coordinate Mg(2+). Residues 45 to 46 (DS), D84, and K113 each bind 3-methyl-2-oxobutanoate. Residue E115 participates in Mg(2+) binding. Catalysis depends on E182, which acts as the Proton acceptor.

Belongs to the PanB family. As to quaternary structure, homodecamer; pentamer of dimers. Mg(2+) is required as a cofactor.

Its subcellular location is the cytoplasm. The catalysed reaction is 3-methyl-2-oxobutanoate + (6R)-5,10-methylene-5,6,7,8-tetrahydrofolate + H2O = 2-dehydropantoate + (6S)-5,6,7,8-tetrahydrofolate. Its pathway is cofactor biosynthesis; coenzyme A biosynthesis. Its function is as follows. Catalyzes the reversible reaction in which hydroxymethyl group from 5,10-methylenetetrahydrofolate is transferred onto alpha-ketoisovalerate to form ketopantoate. This Saccharolobus solfataricus (strain ATCC 35092 / DSM 1617 / JCM 11322 / P2) (Sulfolobus solfataricus) protein is 3-methyl-2-oxobutanoate hydroxymethyltransferase.